A 147-amino-acid polypeptide reads, in one-letter code: Nucleoside diphosphate kinase (147 aa).

Residues K9, F57, R85, T91, R102, and N112 each contribute to the ATP site. The residue at position 91 (T91) is a Phosphothreonine. The active-site Pros-phosphohistidine intermediate is H115. S122 bears the Phosphoserine mark.

It belongs to the NDK family. As to quaternary structure, homotetramer. It depends on Mg(2+) as a cofactor.

The protein localises to the cytoplasm. It catalyses the reaction a 2'-deoxyribonucleoside 5'-diphosphate + ATP = a 2'-deoxyribonucleoside 5'-triphosphate + ADP. The enzyme catalyses a ribonucleoside 5'-diphosphate + ATP = a ribonucleoside 5'-triphosphate + ADP. Functionally, major role in the synthesis of nucleoside triphosphates other than ATP. The ATP gamma phosphate is transferred to the NDP beta phosphate via a ping-pong mechanism, using a phosphorylated active-site intermediate. The chain is Nucleoside diphosphate kinase from Halalkalibacterium halodurans (strain ATCC BAA-125 / DSM 18197 / FERM 7344 / JCM 9153 / C-125) (Bacillus halodurans).